The sequence spans 102 residues: Small ribosomal subunit protein uS10 (102 aa).

This sequence belongs to the universal ribosomal protein uS10 family. In terms of assembly, part of the 30S ribosomal subunit.

Functionally, involved in the binding of tRNA to the ribosomes. The sequence is that of Small ribosomal subunit protein uS10 from Acidithiobacillus ferrooxidans (strain ATCC 53993 / BNL-5-31) (Leptospirillum ferrooxidans (ATCC 53993)).